Here is a 479-residue protein sequence, read N- to C-terminus: FAD-dependent monooxygenase cdmI (479 aa).

3 residues coordinate FAD: E43, G57, and R116. N-linked (GlcNAc...) asparagine glycans are attached at residues N156 and N198. D315 and A328 together coordinate FAD. A helical transmembrane segment spans residues 453 to 473 (PFILAVLAGLGFLLTMFKQQW).

This sequence belongs to the paxM FAD-dependent monooxygenase family. It depends on FAD as a cofactor.

It localises to the membrane. It carries out the reaction verruculide C + AH2 + O2 = verruculide C epoxide + A + H2O. It functions in the pathway secondary metabolite biosynthesis; terpenoid biosynthesis. Its function is as follows. FAD-dependent monooxygenase; part of the gene cluster that mediates the biosynthesis of chrodrimanin B, a meroterpenoid that acts as a potent blocker of insect GABA-gated chloride channels. The first step of the pathway is the biosynthesis of 6-hydroxymellein by the polyketide synthase cdmE. The prenyltransferase cdmH acts as a 6-hydroxymellein 5-farnesyltransferase and produces the hydrophobic metabolite verruculide C. The FAD-dependent monooxygenase cdmI further converts verruculide C into verruculide B. The terpene cyclase cdmG then produced the pentacyclic molecule 3-hydroxypentacecilide A, the backbone structure of chrodrimanin B, via folding the farnesyl moiety of the substrate into the chair-boat conformation. The short-chain dehydrogenase/reductase cdmF functions as the 3-OH dehydrogenase that oxidizes the C-3 hydroxyl group of 3-hydroxypentacecilide A and produces chrodrimanin C, the dehydrogenated product of 3-hydroxypentacecilide A. The cytochrome P450 monooxygenase cdmJ then accepts both 3-hydroxypentacecilide A and chrodrimanin C and functions as a C-7-beta-hydroxylase to produce respectively chrodrimanin H and chrodrimanin F. The dioxygenase cdmA accepts chrodrimanin H to afford chrodrimanin E, which is further transformed to chrodrimanin A by the dioxygenase cdmD. CdmA can also accept chrodrimanin C as substrate to convert it into verruculide A, which is further converted into chrodrimanin T by cdmD. The last step of the biosynthesis is proposed to be performed by the acetyltransferase cdmC which acetylates chrodrimanin A to yield chrodrimanin B. The pathway may also lead to the production of additional shunt products, including chrodrimanins T and U. This Talaromyces verruculosus (Penicillium verruculosum) protein is FAD-dependent monooxygenase cdmI.